Reading from the N-terminus, the 84-residue chain is Sec-independent protein translocase protein TatA (84 aa).

Residues methionine 4 to glycine 24 form a helical membrane-spanning segment. Positions aspartate 46–valine 84 are disordered. Over residues proline 64 to serine 77 the composition is skewed to polar residues.

This sequence belongs to the TatA/E family. The Tat system comprises two distinct complexes: a TatABC complex, containing multiple copies of TatA, TatB and TatC subunits, and a separate TatA complex, containing only TatA subunits. Substrates initially bind to the TatABC complex, which probably triggers association of the separate TatA complex to form the active translocon.

Its subcellular location is the cell inner membrane. Functionally, part of the twin-arginine translocation (Tat) system that transports large folded proteins containing a characteristic twin-arginine motif in their signal peptide across membranes. TatA could form the protein-conducting channel of the Tat system. The chain is Sec-independent protein translocase protein TatA from Gluconobacter oxydans (strain 621H) (Gluconobacter suboxydans).